We begin with the raw amino-acid sequence, 450 residues long: Oxygen-independent coproporphyrinogen III oxidase (450 aa).

In terms of domain architecture, Radical SAM core spans 42–276 (LPAGASASLY…CAIANALKEA (235 aa)). Position 51 (Y51) interacts with S-adenosyl-L-methionine. The [4Fe-4S] cluster site is built by C57 and C61. Residue Y63 coordinates S-adenosyl-L-methionine. Residue C64 coordinates [4Fe-4S] cluster. S-adenosyl-L-methionine contacts are provided by residues G108, 109-110 (GT), E141, Q168, R180, D205, A239, and I325.

The protein belongs to the anaerobic coproporphyrinogen-III oxidase family. As to quaternary structure, monomer. [4Fe-4S] cluster serves as cofactor.

It is found in the cytoplasm. The enzyme catalyses coproporphyrinogen III + 2 S-adenosyl-L-methionine = protoporphyrinogen IX + 2 5'-deoxyadenosine + 2 L-methionine + 2 CO2. It participates in porphyrin-containing compound metabolism; protoporphyrin-IX biosynthesis; protoporphyrinogen-IX from coproporphyrinogen-III (AdoMet route): step 1/1. Functionally, involved in the heme biosynthesis. Catalyzes the anaerobic oxidative decarboxylation of propionate groups of rings A and B of coproporphyrinogen III to yield the vinyl groups in protoporphyrinogen IX. This Bradyrhizobium diazoefficiens (strain JCM 10833 / BCRC 13528 / IAM 13628 / NBRC 14792 / USDA 110) protein is Oxygen-independent coproporphyrinogen III oxidase (hemN).